Reading from the N-terminus, the 275-residue chain is Transcription factor Ovo-like 2 (275 aa).

The segment at 15 to 101 is disordered; it reads SVRSWDELPD…GHLATKQRPV (87 aa). Composition is skewed to basic and acidic residues over residues 18–29 and 39–49; these read SWDELPDEKRAD and LLHDPPEDCRS. The segment covering 56–76 has biased composition (low complexity); the sequence is GSGSSSAGEPGGAESSSSPHA. A compositionally biased stretch (acidic residues) spans 80–89; it reads ETPEPGDAEG. 4 C2H2-type zinc fingers span residues 119–141, 147–169, 175–198, and 214–237; these read HSCDLCGKGFRLQRMLNRHLKCH, HLCTFCGKGFNDTFDLKRHVRTH, YKCNVCNKAFTQRCSLESHLKKIH, and YVCEDCGYTGPTQEDLYLHVNSAH. Phosphoserine is present on S269.

The protein belongs to the krueppel C2H2-type zinc-finger protein family. As to quaternary structure, interacts (via zinc-finger domains) with CEBPA (via bZIP domain); the interaction inhibits the transcription factor activity of CEBPA and is required to repress adipogenesis. In terms of tissue distribution, expressed in testis, ovary, heart and skeletal muscle. Expressed in the cornea, but absent from the corneal endothelium.

Its subcellular location is the nucleus. In terms of biological role, zinc-finger transcription repressor factor. Plays a critical role in maintaining the identity of epithelial lineages by suppressing epithelial-to mesenchymal transition (EMT) mainly through the repression of ZEB1, an EMT inducer. Positively regulates neuronal differentiation. Suppresses cell cycling and terminal differentiation of keratinocytes by directly repressing MYC and NOTCH1. Important for the correct development of primordial germ cells in embryos. Plays dual functions in thermogenesis and adipogenesis to maintain energy balance. Essential for brown/beige adipose tissue-mediated thermogenesis, is necessary for the development of brown adipocytes. In white adipose tissues, limits adipogenesis by blocking CEBPA binding to its transcriptional targets and inhibiting its transcription factor activity. The protein is Transcription factor Ovo-like 2 of Homo sapiens (Human).